Here is a 217-residue protein sequence, read N- to C-terminus: Proteasome subunit beta type-9 (217 aa).

A propeptide spans 1–18 (removed in mature form); the sequence is MLDESLEPGWLSEEVKTG. Threonine 19 serves as the catalytic Nucleophile.

It belongs to the peptidase T1B family. The 26S proteasome consists of a 20S proteasome core and two 19S regulatory subunits. The 20S proteasome core is composed of 28 subunits that are arranged in four stacked rings, resulting in a barrel-shaped structure. The two end rings are each formed by seven alpha subunits, and the two central rings are each formed by seven beta subunits. The catalytic chamber with the active sites is on the inside of the barrel. Component of the immunoproteasome, where it displaces the equivalent housekeeping subunit PSMB6. Autocleaved. The resulting N-terminal Thr residue of the mature subunit is responsible for the nucleophile proteolytic activity.

Its subcellular location is the cytoplasm. It localises to the nucleus. It catalyses the reaction Cleavage of peptide bonds with very broad specificity.. The proteasome is a multicatalytic proteinase complex which is characterized by its ability to cleave peptides with Arg, Phe, Tyr, Leu, and Glu adjacent to the leaving group at neutral or slightly basic pH. The proteasome has an ATP-dependent proteolytic activity. This subunit is involved in antigen processing to generate class I binding peptides. The polypeptide is Proteasome subunit beta type-9 (psmb9) (Oncorhynchus mykiss (Rainbow trout)).